The chain runs to 555 residues: Inositol 1,4,5-triphosphate receptor associated 2 (555 aa).

The Cytoplasmic segment spans residues Met-1–Lys-495. Disordered stretches follow at residues Ser-84 to Pro-103 and Arg-128 to Ala-147. Thr-91 is subject to Phosphothreonine. The span at Thr-91 to Asp-102 shows a compositional bias: low complexity. Positions Ser-129–Ala-142 are enriched in polar residues. The stretch at Thr-227 to Gln-341 forms a coiled coil. 3 positions are modified to phosphoserine: Ser-363, Ser-370, and Ser-424. The tract at residues Glu-437 to Lys-469 is disordered. Residues Thr-451–Asn-465 show a composition bias toward basic and acidic residues. Residues Ala-496–Gly-516 form a helical; Anchor for type IV membrane protein membrane-spanning segment. Residues Gln-517–Val-555 lie on the Lumenal side of the membrane.

This sequence belongs to the IRAG2 family. Interacts (via coiled-coil domain) with ITPR3. Interacts with SUN1 and SUN2. Interacts with microtubules. Interacts with HCN4; regulates HCN4 channel activity. Post-translationally, the removal of the C-terminal lumenal domain occurs by proteolytic processing. As to expression, expressed at high levels in pre B-cells, mature B-cells and pre T-cells. Expressed at low levels in mature T-cells and plasma B-cells. Expressed in germinal center B-cells, splenic marginal zone cells and B-cell lymphomas. Expressed in neuronal cells in the cerebral cortex, epithelial cells in tonsil, adrenal glands, zymogen-producing cells in the stomach and epithelial cells in seminal vesicles.

The protein resides in the cytoplasm. Its subcellular location is the endoplasmic reticulum membrane. The protein localises to the nucleus envelope. It is found in the cytoskeleton. It localises to the microtubule organizing center. The protein resides in the centrosome. Its subcellular location is the spindle pole. The protein localises to the chromosome. Its function is as follows. Plays a role in the delivery of peptides to major histocompatibility complex (MHC) class I molecules; this occurs in a transporter associated with antigen processing (TAP)-independent manner. May play a role in taste signal transduction via ITPR3. May play a role during fertilization in pronucleus congression and fusion. Plays a role in maintaining nuclear shape, maybe as a component of the LINC complex and through interaction with microtubules. Plays a role in the regulation of cellular excitability by regulating the hyperpolarization-activated cyclic nucleotide-gated HCN4 channel activity. This chain is Inositol 1,4,5-triphosphate receptor associated 2, found in Homo sapiens (Human).